A 280-amino-acid polypeptide reads, in one-letter code: uncharacterized protein (280 aa).

Residue Tyr54 is the Proton donor of the active site. A substrate-binding site is contributed by His116. Ser194–Asn246 provides a ligand contact to NADP(+).

This sequence belongs to the aldo/keto reductase family.

This is an uncharacterized protein from Bacillus subtilis (strain 168).